The following is a 312-amino-acid chain: UDP-N-acetylenolpyruvoylglucosamine reductase (312 aa).

Positions Gly24–Glu206 constitute an FAD-binding PCMH-type domain. Arg166 is a catalytic residue. Ser217 acts as the Proton donor in catalysis. The active site involves Glu307.

Belongs to the MurB family. Requires FAD as cofactor.

The protein localises to the cytoplasm. The catalysed reaction is UDP-N-acetyl-alpha-D-muramate + NADP(+) = UDP-N-acetyl-3-O-(1-carboxyvinyl)-alpha-D-glucosamine + NADPH + H(+). It functions in the pathway cell wall biogenesis; peptidoglycan biosynthesis. Functionally, cell wall formation. In Solibacter usitatus (strain Ellin6076), this protein is UDP-N-acetylenolpyruvoylglucosamine reductase.